Reading from the N-terminus, the 536-residue chain is Light-independent protochlorophyllide reductase subunit B (536 aa).

Residue D36 participates in [4Fe-4S] cluster binding. The active-site Proton donor is D292. Residue 427 to 428 (GL) coordinates substrate. Residues 448–469 (SHLGHLGGHQSQTEQQQSQAAT) show a composition bias toward low complexity. Positions 448-489 (SHLGHLGGHQSQTEQQQSQAATNPSTQSNADSSSEESPLWTP) are disordered. A compositionally biased stretch (polar residues) spans 470 to 483 (NPSTQSNADSSSEE).

The protein belongs to the ChlB/BchB/BchZ family. As to quaternary structure, protochlorophyllide reductase is composed of three subunits; ChlL, ChlN and ChlB. Forms a heterotetramer of two ChlB and two ChlN subunits. It depends on [4Fe-4S] cluster as a cofactor.

It carries out the reaction chlorophyllide a + oxidized 2[4Fe-4S]-[ferredoxin] + 2 ADP + 2 phosphate = protochlorophyllide a + reduced 2[4Fe-4S]-[ferredoxin] + 2 ATP + 2 H2O. The protein operates within porphyrin-containing compound metabolism; chlorophyll biosynthesis (light-independent). Component of the dark-operative protochlorophyllide reductase (DPOR) that uses Mg-ATP and reduced ferredoxin to reduce ring D of protochlorophyllide (Pchlide) to form chlorophyllide a (Chlide). This reaction is light-independent. The NB-protein (ChlN-ChlB) is the catalytic component of the complex. This is Light-independent protochlorophyllide reductase subunit B from Prochlorococcus marinus (strain MIT 9313).